The primary structure comprises 200 residues: Small heat shock protein hspG2 (200 aa).

Residues 33–200 enclose the sHSP domain; the sequence is NKRIDIIPSM…DNFQIKLKSI (168 aa). Residues 86–139 form a disordered region; it reads KLQQQQQQQSEKSSQSTNNKDDDEPSIEEYEDDTKLKSNLNKNTENKDENKTTS. A compositionally biased stretch (low complexity) spans 88 to 101; sequence QQQQQQQSEKSSQS. Residues 106–117 show a composition bias toward acidic residues; it reads DDDEPSIEEYED.

The protein belongs to the small heat shock protein (HSP20) family.

This Dictyostelium discoideum (Social amoeba) protein is Small heat shock protein hspG2 (hspG2).